A 343-amino-acid polypeptide reads, in one-letter code: Phosphoribosylformylglycinamidine cyclo-ligase (343 aa).

This sequence belongs to the AIR synthase family.

The protein localises to the cytoplasm. It catalyses the reaction 2-formamido-N(1)-(5-O-phospho-beta-D-ribosyl)acetamidine + ATP = 5-amino-1-(5-phospho-beta-D-ribosyl)imidazole + ADP + phosphate + H(+). The protein operates within purine metabolism; IMP biosynthesis via de novo pathway; 5-amino-1-(5-phospho-D-ribosyl)imidazole from N(2)-formyl-N(1)-(5-phospho-D-ribosyl)glycinamide: step 2/2. The chain is Phosphoribosylformylglycinamidine cyclo-ligase from Enterococcus faecalis (strain ATCC 700802 / V583).